Here is a 662-residue protein sequence, read N- to C-terminus: High affinity sulfate transporter 2 (662 aa).

Residues 1 to 35 (MSQRVSDQAMAEVIAETRTNSSSRRHGGGDDTPSL) form a disordered region. Transmembrane regions (helical) follow at residues 103–123 (GDFI…LAYA), 128–148 (LDPW…AFMG), 153–173 (IAIG…SNEI), 182–202 (LRLA…LGVC), 205–225 (GFLI…GAAI), 264–284 (WETI…KYIA), 291–311 (FWVS…FVYI), 346–366 (AGVR…MAIG), 383–403 (MVAM…VTTG), 420–440 (VSNI…TPLF), 447–467 (VLAS…AMVL), and 481–501 (GAFF…AVAI). An STAS domain is found at 532 to 655 (QYPKAEQIPG…LTVADAVATY (124 aa)).

The protein belongs to the SLC26A/SulP transporter (TC 2.A.53) family.

The protein resides in the membrane. In terms of biological role, high-affinity H(+)/sulfate cotransporter that mediates the uptake of sulfate by plant roots from low concentrations of sulfate in the soil solution. The sequence is that of High affinity sulfate transporter 2 (ST2) from Stylosanthes hamata (Caribbean stylo).